Here is a 176-residue protein sequence, read N- to C-terminus: Endoribonuclease YbeY (176 aa).

Zn(2+) is bound by residues histidine 128, histidine 132, and histidine 138.

This sequence belongs to the endoribonuclease YbeY family. Requires Zn(2+) as cofactor.

The protein resides in the cytoplasm. Functionally, single strand-specific metallo-endoribonuclease involved in late-stage 70S ribosome quality control and in maturation of the 3' terminus of the 16S rRNA. The polypeptide is Endoribonuclease YbeY (Zymomonas mobilis subsp. mobilis (strain ATCC 31821 / ZM4 / CP4)).